We begin with the raw amino-acid sequence, 492 residues long: Malonyl-CoA decarboxylase, mitochondrial (492 aa).

Positions 1–28 (MRGLGPGLRARRLLPLRSPPRPPGPRGR) are disordered. Residues 1–38 (MRGLGPGLRARRLLPLRSPPRPPGPRGRRLCGGLAASA) constitute a mitochondrion transit peptide. Residues 39–189 (MDELLRRAVP…VLKSMLSEWF (151 aa)) are alpha-helical domain. The residue at position 58 (Lys-58) is an N6-acetyllysine. Lys-167 is modified (N6-acetyllysine; alternate). Position 167 is an N6-succinyllysine; alternate (Lys-167). The tract at residues 190-492 (SSGFLNLERV…VAQFQNNSKL (303 aa)) is catalytic domain. N6-acetyllysine is present on Lys-210. Lys-221 carries the N6-succinyllysine modification. Residue 298 to 304 (QGVELGT) participates in malonyl-CoA binding. Position 316 is an N6-acetyllysine (Lys-316). Ser-328 is a binding site for malonyl-CoA. Ser-328 functions as the Proton acceptor in the catalytic mechanism. An N6-acetyllysine; alternate modification is found at Lys-385. N6-succinyllysine; alternate is present on Lys-385. Position 388 is an N6-acetyllysine (Lys-388). His-422 serves as a coordination point for malonyl-CoA. His-422 (proton donor) is an active-site residue. An N6-acetyllysine mark is found at Lys-441 and Lys-471. Residues 490–492 (SKL) carry the Microbody targeting signal motif.

Homotetramer. Dimer of dimers. The two subunits within a dimer display conformational differences suggesting that at any given moment, only one of the two subunits is competent for malonyl-CoA binding and catalytic activity. Under oxidizing conditions, can form disulfide-linked homotetramers (in vitro). Associates with the peroxisomal targeting signal receptor PEX5. Interchain disulfide bonds may form in peroxisomes (Potential). Interchain disulfide bonds are not expected to form in the reducing environment of the cytoplasm and mitochondria. In terms of processing, acetylation at Lys-471 activates malonyl-CoA decarboxylase activity. Deacetylation at Lys-471 by SIRT4 represses activity, leading to promote lipogenesis.

The protein resides in the cytoplasm. The protein localises to the mitochondrion matrix. Its subcellular location is the peroxisome. It is found in the peroxisome matrix. It catalyses the reaction malonyl-CoA + H(+) = acetyl-CoA + CO2. Its pathway is metabolic intermediate biosynthesis; acetyl-CoA biosynthesis; acetyl-CoA from malonyl-CoA: step 1/1. With respect to regulation, malonyl-CoA decarboxylase activity does not require any cofactors or divalent metal ions. In terms of biological role, catalyzes the conversion of malonyl-CoA to acetyl-CoA. In the fatty acid biosynthesis MCD selectively removes malonyl-CoA and thus assures that methyl-malonyl-CoA is the only chain elongating substrate for fatty acid synthase and that fatty acids with multiple methyl side chains are produced. In peroxisomes it may be involved in degrading intraperoxisomal malonyl-CoA, which is generated by the peroxisomal beta-oxidation of odd chain-length dicarboxylic fatty acids. Plays a role in the metabolic balance between glucose and lipid oxidation in muscle independent of alterations in insulin signaling. Plays a role in controlling the extent of ischemic injury by promoting glucose oxidation. The protein is Malonyl-CoA decarboxylase, mitochondrial of Mus musculus (Mouse).